The primary structure comprises 310 residues: tRNA dimethylallyltransferase (310 aa).

An ATP-binding site is contributed by G15–T22. A substrate-binding site is contributed by T17–T22.

It belongs to the IPP transferase family. As to quaternary structure, monomer. It depends on Mg(2+) as a cofactor.

The catalysed reaction is adenosine(37) in tRNA + dimethylallyl diphosphate = N(6)-dimethylallyladenosine(37) in tRNA + diphosphate. Functionally, catalyzes the transfer of a dimethylallyl group onto the adenine at position 37 in tRNAs that read codons beginning with uridine, leading to the formation of N6-(dimethylallyl)adenosine (i(6)A). This Nocardioides sp. (strain ATCC BAA-499 / JS614) protein is tRNA dimethylallyltransferase.